The chain runs to 179 residues: Cytochrome b6-f complex iron-sulfur subunit 1 (179 aa).

Residues 21–43 (LLTFGTVTGVALGALYPVVNYFI) form a helical membrane-spanning segment. The Rieske domain maps to 61–162 (GNDVSVSKFL…AKTENDKIVL (102 aa)). [2Fe-2S] cluster is bound by residues Cys-108, His-110, Cys-126, and His-129. Cys-113 and Cys-128 are oxidised to a cystine.

The protein belongs to the Rieske iron-sulfur protein family. In terms of assembly, the 4 large subunits of the cytochrome b6-f complex are cytochrome b6, subunit IV (17 kDa polypeptide, PetD), cytochrome f and the Rieske protein, while the 4 small subunits are PetG, PetL, PetM and PetN. The complex functions as a dimer. Requires [2Fe-2S] cluster as cofactor.

It localises to the cellular thylakoid membrane. The catalysed reaction is 2 oxidized [plastocyanin] + a plastoquinol + 2 H(+)(in) = 2 reduced [plastocyanin] + a plastoquinone + 4 H(+)(out). Its function is as follows. Component of the cytochrome b6-f complex, which mediates electron transfer between photosystem II (PSII) and photosystem I (PSI), cyclic electron flow around PSI, and state transitions. The polypeptide is Cytochrome b6-f complex iron-sulfur subunit 1 (Nostoc sp. (strain PCC 7120 / SAG 25.82 / UTEX 2576)).